The primary structure comprises 354 residues: Peptide chain release factor 1 (354 aa).

An N5-methylglutamine modification is found at Gln-230.

The protein belongs to the prokaryotic/mitochondrial release factor family. Post-translationally, methylated by PrmC. Methylation increases the termination efficiency of RF1.

The protein localises to the cytoplasm. Its function is as follows. Peptide chain release factor 1 directs the termination of translation in response to the peptide chain termination codons UAG and UAA. This is Peptide chain release factor 1 from Novosphingobium aromaticivorans (strain ATCC 700278 / DSM 12444 / CCUG 56034 / CIP 105152 / NBRC 16084 / F199).